The primary structure comprises 173 residues: HTH-type transcriptional regulator IscR (173 aa).

One can recognise an HTH rrf2-type domain in the interval K2–K131. The segment at residues L28–K51 is a DNA-binding region (H-T-H motif). [2Fe-2S] cluster-binding residues include C92, C98, and C104.

[2Fe-2S] cluster serves as cofactor.

Functionally, regulates the transcription of several operons and genes involved in the biogenesis of Fe-S clusters and Fe-S-containing proteins. The sequence is that of HTH-type transcriptional regulator IscR from Vibrio atlanticus (strain LGP32) (Vibrio splendidus (strain Mel32)).